The following is a 291-amino-acid chain: MAETSALPTGFGELEVLAVGMVLLVEALSGLSLNTLTIFSFCKTPELRTPCHLLVLSLALADSGISLNALVAATSSLLRRWPYGSDGCQAHGFQGFVTALASICSSAAIAWGRYHHYCTRSQLAWNSAVSLVLFVWLSSAFWAALPLLGWGHYDYEPLGTCCTLDYSKGDRNFTSFLFTMSFFNFAMPLFITITSYSLMEQKLGKSGHLQVNTTLPARTLLLGWGPYAILYLYAVIADVTSISPKLQMVPALIAKMVPTINAINYALGNEMVCRGIWQCLSPQKREKDRTK.

Over 1–15 (MAETSALPTGFGELE) the chain is Extracellular. Residues 16 to 36 (VLAVGMVLLVEALSGLSLNTL) traverse the membrane as a helical segment. At 37–52 (TIFSFCKTPELRTPCH) the chain is on the cytoplasmic side. Residues 53–73 (LLVLSLALADSGISLNALVAA) form a helical membrane-spanning segment. Topologically, residues 74–91 (TSSLLRRWPYGSDGCQAH) are extracellular. C88 and C162 form a disulfide bridge. The chain crosses the membrane as a helical span at residues 92 to 112 (GFQGFVTALASICSSAAIAWG). Residues 113–130 (RYHHYCTRSQLAWNSAVS) are Cytoplasmic-facing. Residues 131-151 (LVLFVWLSSAFWAALPLLGWG) traverse the membrane as a helical segment. Residues 152–175 (HYDYEPLGTCCTLDYSKGDRNFTS) lie on the Extracellular side of the membrane. Residue N172 is glycosylated (N-linked (GlcNAc...) asparagine). A helical membrane pass occupies residues 176–196 (FLFTMSFFNFAMPLFITITSY). The Cytoplasmic portion of the chain corresponds to 197–219 (SLMEQKLGKSGHLQVNTTLPART). A helical transmembrane segment spans residues 220-240 (LLLGWGPYAILYLYAVIADVT). The Extracellular portion of the chain corresponds to 241-247 (SISPKLQ). The helical transmembrane segment at 248–268 (MVPALIAKMVPTINAINYALG) threads the bilayer. Position 255 is an N6-(retinylidene)lysine (K255). Topologically, residues 269–291 (NEMVCRGIWQCLSPQKREKDRTK) are cytoplasmic.

The protein belongs to the G-protein coupled receptor 1 family. Opsin subfamily. In terms of processing, covalently binds all-trans- and 11-cis-retinal. In terms of tissue distribution, preferentially expressed at high levels in the retinal pigment epithelium (RPE) and Mueller cells of the neural retina.

The protein localises to the membrane. Receptor for all-trans- and 11-cis-retinal. Binds preferentially to the former and may catalyze the isomerization of the chromophore by a retinochrome-like mechanism. This is RPE-retinal G protein-coupled receptor (RGR) from Homo sapiens (Human).